A 158-amino-acid chain; its full sequence is Transcriptional repressor NrdR (158 aa).

A zinc finger lies at 3-34 (CPYCQSEDTQVKDSRPAEDGAVIRRRRVCSVC). In terms of domain architecture, ATP-cone spans 49–139 (LMVVKKSGRR…VYRNFSKAVD (91 aa)).

The protein belongs to the NrdR family. Zn(2+) serves as cofactor.

Its function is as follows. Negatively regulates transcription of bacterial ribonucleotide reductase nrd genes and operons by binding to NrdR-boxes. The polypeptide is Transcriptional repressor NrdR (Brucella abortus (strain S19)).